A 127-amino-acid polypeptide reads, in one-letter code: Small ribosomal subunit protein uS11 (127 aa).

It belongs to the universal ribosomal protein uS11 family. In terms of assembly, part of the 30S ribosomal subunit. Interacts with proteins S7 and S18. Binds to IF-3.

In terms of biological role, located on the platform of the 30S subunit, it bridges several disparate RNA helices of the 16S rRNA. Forms part of the Shine-Dalgarno cleft in the 70S ribosome. This chain is Small ribosomal subunit protein uS11, found in Rickettsia rickettsii (strain Iowa).